The primary structure comprises 281 residues: Oxidase pynE (281 aa).

It belongs to the avfA family.

The protein operates within secondary metabolite biosynthesis. Oxidase; part of the gene cluster that mediates the biosynthesis of pyranonigrins, a family of antioxidative compounds. The first step of pyranonigrins biosynthesis is performed by the hybrid PKS-NRPS synthetase that condenses 6 malonyl-CoA units to an acetyl starter unit, to form a 1,3,5-trioxotetradecane-6,8-dienyl-ACP. The enoyl reductase (ER) domain of pynA is likely to be functional during the first two rounds of polyketide chain extension, to generate the saturated C-C bonds of the alkyl side chain. PynA subsequently forms the amide bond between the acyl chain and L-serine. Although pynA has a terminal reductase domain, it appears to require the thioesterase pynI for the release of the straight-chain intermediate from pynA via the formation of a tetramic acid pyranonigrin J. The methyltransferase pynC then coverts pyranonigrin J to pyranonigrin I via N-methylation. The FAD-dependent monooxygenase pynG catalyzes an epoxidation-mediated cyclization to form the dihydro-gamma-pyrone moiety, followed by pynD-catalyzed oxidation of the alcohol to the ketone and enolization to yield the characteristic tetramic acid-fused gamma-pyrone core of pyranonigrin H. Pyranonigrin H is substrate of pynH for dehydration-mediated exo-methylene formation from the serine side chain to produce pyranonigrin E, before the oxidase pynE reduces the exo-methylene of pyranonigrin E into a pendant methyl to form pyranonigrin G. The FAD-linked oxidoreductase pynB performs the reverse reaction and converts pyranonigrin G back to pyranonigrin E. This is Oxidase pynE from Aspergillus niger (strain ATCC MYA-4892 / CBS 513.88 / FGSC A1513).